A 440-amino-acid chain; its full sequence is Xylose isomerase (440 aa).

Active-site residues include His-101 and Asp-104. Glu-232, Glu-268, His-271, Asp-296, Asp-307, Asp-309, and Asp-339 together coordinate Mg(2+).

It belongs to the xylose isomerase family. As to quaternary structure, homotetramer. Mg(2+) serves as cofactor.

The protein resides in the cytoplasm. The catalysed reaction is alpha-D-xylose = alpha-D-xylulofuranose. The sequence is that of Xylose isomerase from Enterobacter sp. (strain 638).